A 660-amino-acid chain; its full sequence is Probable Xaa-Pro aminopeptidase PTRG_10574 (660 aa).

Asp-274, Asp-285, Glu-435, and Glu-476 together coordinate Mn(2+). Residues 641 to 660 (SAGSGSTPLWKPHNKQDKKN) are disordered.

The protein belongs to the peptidase M24B family. The cofactor is Mn(2+).

The enzyme catalyses Release of any N-terminal amino acid, including proline, that is linked to proline, even from a dipeptide or tripeptide.. Its function is as follows. Catalyzes the removal of a penultimate prolyl residue from the N-termini of peptides. This chain is Probable Xaa-Pro aminopeptidase PTRG_10574, found in Pyrenophora tritici-repentis (strain Pt-1C-BFP) (Wheat tan spot fungus).